Reading from the N-terminus, the 178-residue chain is Large ribosomal subunit protein bL17 (178 aa).

Basic and acidic residues predominate over residues aspartate 126–glutamate 139. The segment at aspartate 126–alanine 178 is disordered. Over residues glutamine 140 to alanine 163 the composition is skewed to low complexity. The segment covering alanine 164–alanine 178 has biased composition (basic and acidic residues).

The protein belongs to the bacterial ribosomal protein bL17 family. As to quaternary structure, part of the 50S ribosomal subunit. Contacts protein L32.

This chain is Large ribosomal subunit protein bL17, found in Nocardia farcinica (strain IFM 10152).